Here is a 626-residue protein sequence, read N- to C-terminus: Chaperone protein DnaK (626 aa).

Thr-175 is modified (phosphothreonine; by autocatalysis). Residues 586 to 606 (GAEGAAAGADGAGASAGSASG) are compositionally biased toward low complexity. The segment at 586–626 (GAEGAAAGADGAGASAGSASGSDDDTVEAEVVDDDDDKDNK) is disordered. The span at 607-626 (SDDDTVEAEVVDDDDDKDNK) shows a compositional bias: acidic residues.

It belongs to the heat shock protein 70 family.

Acts as a chaperone. In Bifidobacterium longum (strain DJO10A), this protein is Chaperone protein DnaK.